A 188-amino-acid chain; its full sequence is Elongation factor P (188 aa).

Belongs to the elongation factor P family.

It localises to the cytoplasm. It functions in the pathway protein biosynthesis; polypeptide chain elongation. Its function is as follows. Involved in peptide bond synthesis. Stimulates efficient translation and peptide-bond synthesis on native or reconstituted 70S ribosomes in vitro. Probably functions indirectly by altering the affinity of the ribosome for aminoacyl-tRNA, thus increasing their reactivity as acceptors for peptidyl transferase. The protein is Elongation factor P of Ralstonia nicotianae (strain ATCC BAA-1114 / GMI1000) (Ralstonia solanacearum).